Consider the following 135-residue polypeptide: Large ribosomal subunit protein eL32 (135 aa).

K9 participates in a covalent cross-link: Glycyl lysine isopeptide (Lys-Gly) (interchain with G-Cter in SUMO2). K50 bears the N6-succinyllysine mark. The residue at position 62 (S62) is a Phosphoserine.

The protein belongs to the eukaryotic ribosomal protein eL32 family. In terms of assembly, component of the large ribosomal subunit.

The protein resides in the cytoplasm. Functionally, component of the large ribosomal subunit. The ribosome is a large ribonucleoprotein complex responsible for the synthesis of proteins in the cell. The chain is Large ribosomal subunit protein eL32 (RPL32) from Macaca fascicularis (Crab-eating macaque).